Reading from the N-terminus, the 124-residue chain is Small ribosomal subunit protein uS12 (124 aa).

The interval 105–124 is disordered; sequence SGVNDRRQGRSKYGAKRPKS. Basic residues predominate over residues 113 to 124; sequence GRSKYGAKRPKS.

It belongs to the universal ribosomal protein uS12 family. In terms of assembly, part of the 30S ribosomal subunit. Contacts proteins S8 and S17. May interact with IF1 in the 30S initiation complex.

With S4 and S5 plays an important role in translational accuracy. Functionally, interacts with and stabilizes bases of the 16S rRNA that are involved in tRNA selection in the A site and with the mRNA backbone. Located at the interface of the 30S and 50S subunits, it traverses the body of the 30S subunit contacting proteins on the other side and probably holding the rRNA structure together. The combined cluster of proteins S8, S12 and S17 appears to hold together the shoulder and platform of the 30S subunit. This Idiomarina loihiensis (strain ATCC BAA-735 / DSM 15497 / L2-TR) protein is Small ribosomal subunit protein uS12.